We begin with the raw amino-acid sequence, 409 residues long: Inactive serine protease 35 (409 aa).

The first 20 residues, 1 to 20, serve as a signal peptide directing secretion; the sequence is MENTLLWLVILIPGWALSDG. An N-linked (GlcNAc...) asparagine glycan is attached at asparagine 90. In terms of domain architecture, Peptidase S1 spans 124 to 404; it reads VYGTDSRFSI…ICLWIHGNAA (281 aa). A disulfide bridge links cysteine 154 with cysteine 170. A compositionally biased stretch (basic residues) spans 188–207; it reads VLKMRNKGGRKKRRGSKRSR. Residues 188–247 are disordered; the sequence is VLKMRNKGGRKKRRGSKRSRREAESAGQSQAHLRESTTQRPGKKSRRGPRVTQGRPSFQW.

The protein belongs to the peptidase S1 family. In terms of tissue distribution, in ovary, it localizes to the theca cells of pre-antral follicles, the theca and granulosa cells of pre-ovulatory and ovulatory follicles, as well as to the developing corpus luteum.

It localises to the secreted. The chain is Inactive serine protease 35 (Prss35) from Mus musculus (Mouse).